A 70-amino-acid chain; its full sequence is ATP synthase subunit c (70 aa).

A run of 2 helical transmembrane segments spans residues 4–24 (IAAA…NGLI) and 45–65 (LMFI…VIAF).

This sequence belongs to the ATPase C chain family. F-type ATPases have 2 components, F(1) - the catalytic core - and F(0) - the membrane proton channel. F(1) has five subunits: alpha(3), beta(3), gamma(1), delta(1), epsilon(1). F(0) has three main subunits: a(1), b(2) and c(10-14). The alpha and beta chains form an alternating ring which encloses part of the gamma chain. F(1) is attached to F(0) by a central stalk formed by the gamma and epsilon chains, while a peripheral stalk is formed by the delta and b chains.

Its subcellular location is the cell membrane. Its function is as follows. F(1)F(0) ATP synthase produces ATP from ADP in the presence of a proton or sodium gradient. F-type ATPases consist of two structural domains, F(1) containing the extramembraneous catalytic core and F(0) containing the membrane proton channel, linked together by a central stalk and a peripheral stalk. During catalysis, ATP synthesis in the catalytic domain of F(1) is coupled via a rotary mechanism of the central stalk subunits to proton translocation. Key component of the F(0) channel; it plays a direct role in translocation across the membrane. A homomeric c-ring of between 10-14 subunits forms the central stalk rotor element with the F(1) delta and epsilon subunits. The polypeptide is ATP synthase subunit c (Bacillus licheniformis (strain ATCC 14580 / DSM 13 / JCM 2505 / CCUG 7422 / NBRC 12200 / NCIMB 9375 / NCTC 10341 / NRRL NRS-1264 / Gibson 46)).